A 79-amino-acid polypeptide reads, in one-letter code: Acyl carrier protein (79 aa).

The Carrier domain maps to Ser2–Lys77. Position 37 is an O-(pantetheine 4'-phosphoryl)serine (Ser37).

It belongs to the acyl carrier protein (ACP) family. In terms of processing, 4'-phosphopantetheine is transferred from CoA to a specific serine of apo-ACP by AcpS. This modification is essential for activity because fatty acids are bound in thioester linkage to the sulfhydryl of the prosthetic group.

The protein localises to the cytoplasm. It participates in lipid metabolism; fatty acid biosynthesis. Functionally, carrier of the growing fatty acid chain in fatty acid biosynthesis. The protein is Acyl carrier protein of Gluconacetobacter diazotrophicus (strain ATCC 49037 / DSM 5601 / CCUG 37298 / CIP 103539 / LMG 7603 / PAl5).